Consider the following 517-residue polypeptide: Cytochrome P450 monooxygenase polD (517 aa).

Residues V5–H27 traverse the membrane as a helical segment. C435 lines the heme pocket.

Belongs to the cytochrome P450 family. Heme is required as a cofactor.

It localises to the membrane. Cytochrome P450 monooxygenase; part of the gene cluster that mediates the biosynthesis of antifungal fernane-type triterpenoid polytolypin. PolD doe not seem to be involved in the biosynthesis of polytolypin. Within the pathway, the triterpene cyclase polA first catalyzes the cyclization of 2,3-oxidosqualene to motiol, polc converts the 4-alpha-methyl group of motiol to a carboxyl group, polB is responsible for appending a hydroxyl group at the 2-alpha position and polE is a dual functional P450, which can catalyze the formation of both the 1-beta-hydroxyl group and 10-beta-carboxyl group. The protein is Cytochrome P450 monooxygenase polD of Polytolypa hystricis (strain UAMH7299).